Consider the following 179-residue polypeptide: NADH-quinone oxidoreductase subunit B 1 (179 aa).

The [4Fe-4S] cluster site is built by cysteine 38, cysteine 39, cysteine 104, and cysteine 133.

The protein belongs to the complex I 20 kDa subunit family. NDH-1 is composed of 14 different subunits. Subunits NuoB, C, D, E, F, and G constitute the peripheral sector of the complex. It depends on [4Fe-4S] cluster as a cofactor.

The protein localises to the cell membrane. It carries out the reaction a quinone + NADH + 5 H(+)(in) = a quinol + NAD(+) + 4 H(+)(out). Functionally, NDH-1 shuttles electrons from NADH, via FMN and iron-sulfur (Fe-S) centers, to quinones in the respiratory chain. The immediate electron acceptor for the enzyme in this species is believed to be ubiquinone. Couples the redox reaction to proton translocation (for every two electrons transferred, four hydrogen ions are translocated across the cytoplasmic membrane), and thus conserves the redox energy in a proton gradient. This is NADH-quinone oxidoreductase subunit B 1 from Herpetosiphon aurantiacus (strain ATCC 23779 / DSM 785 / 114-95).